The chain runs to 297 residues: Transmembrane protein 169 (297 aa).

The disordered stretch occupies residues 1-88; sequence MEESAPVESQ…EGEDFLDYPG (88 aa). Topologically, residues 1-159 are extracellular; it reads MEESAPVESQ…CQVGADQGPH (159 aa). Positions 22-31 are enriched in low complexity; the sequence is RRAVAAVLAL. 2 stretches are compositionally biased toward acidic residues: residues 61–70 and 78–88; these read KTDEEPEESE and EEGEDFLDYPG. A helical transmembrane segment spans residues 160-180; it reads VVLWTLVCLPVVFVLSFVVSF. The Cytoplasmic segment spans residues 181 to 210; the sequence is YYGTITWYNIFLVYNEERTFWHKISCCPCL. A helical transmembrane segment spans residues 211–231; that stretch reads ILFYPVLIMTMASSLGLYAAV. Residues 232–297 are Extracellular-facing; it reads AQLSWSWAAW…PIQEVETSTV (66 aa).

It localises to the membrane. The protein is Transmembrane protein 169 (Tmem169) of Mus musculus (Mouse).